A 230-amino-acid chain; its full sequence is MVQRSKKYREAAEKIDRNNLYTANEAIALLKSMPEYKFDQTVEAVLRLNVDPRKADQLVRGSVNLPNGTGKTAKVLVFARGPKATEALEAGADIVGDDDLVQKVADGFLDFDSVVATPDMMGKVGRLGRVLGPRGLMPNPKTGTVTMDVTKAIKDIKGGKVDFRVDKNGNLSFLIGKMSFTEQALDENFKAVADEVKRLKPSTVKGRYVTKATITSTMNPGVPVDPAVVA.

Belongs to the universal ribosomal protein uL1 family. Part of the 50S ribosomal subunit.

Its function is as follows. Binds directly to 23S rRNA. The L1 stalk is quite mobile in the ribosome, and is involved in E site tRNA release. Functionally, protein L1 is also a translational repressor protein, it controls the translation of the L11 operon by binding to its mRNA. The sequence is that of Large ribosomal subunit protein uL1 from Bifidobacterium adolescentis (strain ATCC 15703 / DSM 20083 / NCTC 11814 / E194a).